Here is a 579-residue protein sequence, read N- to C-terminus: DBIRD complex subunit ZNF326 (579 aa).

The segment at 1-124 is mediates transcriptional activation; sequence MDFEDDYTHS…YRNSLDSFGG (124 aa). 12 positions are modified to phosphoserine: S48, S56, S63, S69, S81, S82, S91, S106, S114, S118, S121, and S137. K140 is covalently cross-linked (Glycyl lysine isopeptide (Lys-Gly) (interchain with G-Cter in SUMO2)). The disordered stretch occupies residues 154–194; sequence YSSYSSFSSPHMKPAPVGSRGRGTPAYPESTFGSRNYDAFG. Position 173 is an omega-N-methylarginine (R173). S212 is subject to Phosphoserine. The residue at position 235 (R235) is an Omega-N-methylarginine. The short motif at 238 to 260 is the Bipartite nuclear localization signal element; the sequence is KRKMIQPFNKPGGTFIKKPKLAK. A Glycyl lysine isopeptide (Lys-Gly) (interchain with G-Cter in SUMO2) cross-link involves residue K240. K247 carries the N6-acetyllysine; alternate modification. A Glycyl lysine isopeptide (Lys-Gly) (interchain with G-Cter in SUMO2); alternate cross-link involves residue K247. Residues 248-302 are disordered; the sequence is PGGTFIKKPKLAKPVEKMSLSKSPTKTDPKNEEEEKRRIEARREKQRRRREKNSE. T251 is modified (phosphothreonine). Glycyl lysine isopeptide (Lys-Gly) (interchain with G-Cter in SUMO2) cross-links involve residues K254 and K264. A Phosphoserine modification is found at S270. The span at 272 to 290 shows a compositional bias: basic and acidic residues; the sequence is TKTDPKNEEEEKRRIEARR. The C2H2 AKAP95-type 1 zinc-finger motif lies at 314-336; sequence CSFCKFRTFEEKDIELHLESASH. K401 participates in a covalent cross-link: Glycyl lysine isopeptide (Lys-Gly) (interchain with G-Cter in SUMO2). Residues 407–430 form a C2H2 AKAP95-type 2 zinc finger; that stretch reads CSACSVYIPALHSSVQQHLKSPDH. Residues K459 and K467 each participate in a glycyl lysine isopeptide (Lys-Gly) (interchain with G-Cter in SUMO2) cross-link. Residues 470–579 are disordered; that stretch reads NPFEIQDHSQ…GFSVDQAEEN (110 aa). Acidic residues-rich tracts occupy residues 483–520, 529–541, and 549–565; these read IEGDEEEEEKIDEPVEEEEEEEEEEEEVGEVEEAEEVG, GDTEEGGDVEGEG, and GEGEGEGVGEVEEEEAK.

It belongs to the AKAP95 family. Component of the DBIRD complex. Interacts with CCAR2; the interaction is direct.

The protein resides in the nucleus matrix. Core component of the DBIRD complex, a multiprotein complex that acts at the interface between core mRNP particles and RNA polymerase II (RNAPII) and integrates transcript elongation with the regulation of alternative splicing: the DBIRD complex affects local transcript elongation rates and alternative splicing of a large set of exons embedded in (A + T)-rich DNA regions. May play a role in neuronal differentiation and is able to bind DNA and activate expression in vitro. This is DBIRD complex subunit ZNF326 (ZNF326) from Bos taurus (Bovine).